Reading from the N-terminus, the 225-residue chain is Cytidylate kinase (225 aa).

Gly11–Thr19 contributes to the ATP binding site.

It belongs to the cytidylate kinase family. Type 1 subfamily.

The protein resides in the cytoplasm. It carries out the reaction CMP + ATP = CDP + ADP. The catalysed reaction is dCMP + ATP = dCDP + ADP. This chain is Cytidylate kinase, found in Bacillus cereus (strain AH187).